Consider the following 339-residue polypeptide: Ketol-acid reductoisomerase (NADP(+)) (339 aa).

One can recognise a KARI N-terminal Rossmann domain in the interval 1–182 (MRVYYDRDAD…GGGRSGIIET (182 aa)). Residues 24–27 (YGSQ), Lys-48, Ser-51, Thr-53, and 83–86 (DELQ) contribute to the NADP(+) site. His-108 is a catalytic residue. Gly-134 is a binding site for NADP(+). In terms of domain architecture, KARI C-terminal knotted spans 183–328 (NFKEECETDL…AKLRGMMPWI (146 aa)). Mg(2+) contacts are provided by Asp-191, Glu-195, Glu-227, and Glu-231. Residue Ser-252 coordinates substrate.

It belongs to the ketol-acid reductoisomerase family. Requires Mg(2+) as cofactor.

It catalyses the reaction (2R)-2,3-dihydroxy-3-methylbutanoate + NADP(+) = (2S)-2-acetolactate + NADPH + H(+). The catalysed reaction is (2R,3R)-2,3-dihydroxy-3-methylpentanoate + NADP(+) = (S)-2-ethyl-2-hydroxy-3-oxobutanoate + NADPH + H(+). Its pathway is amino-acid biosynthesis; L-isoleucine biosynthesis; L-isoleucine from 2-oxobutanoate: step 2/4. The protein operates within amino-acid biosynthesis; L-valine biosynthesis; L-valine from pyruvate: step 2/4. In terms of biological role, involved in the biosynthesis of branched-chain amino acids (BCAA). Catalyzes an alkyl-migration followed by a ketol-acid reduction of (S)-2-acetolactate (S2AL) to yield (R)-2,3-dihydroxy-isovalerate. In the isomerase reaction, S2AL is rearranged via a Mg-dependent methyl migration to produce 3-hydroxy-3-methyl-2-ketobutyrate (HMKB). In the reductase reaction, this 2-ketoacid undergoes a metal-dependent reduction by NADPH to yield (R)-2,3-dihydroxy-isovalerate. This Agrobacterium fabrum (strain C58 / ATCC 33970) (Agrobacterium tumefaciens (strain C58)) protein is Ketol-acid reductoisomerase (NADP(+)).